We begin with the raw amino-acid sequence, 360 residues long: Peptide chain release factor 1 (360 aa).

The residue at position 237 (Gln-237) is an N5-methylglutamine.

This sequence belongs to the prokaryotic/mitochondrial release factor family. In terms of processing, methylated by PrmC. Methylation increases the termination efficiency of RF1.

Its subcellular location is the cytoplasm. Peptide chain release factor 1 directs the termination of translation in response to the peptide chain termination codons UAG and UAA. This is Peptide chain release factor 1 from Pseudomonas aeruginosa (strain LESB58).